Consider the following 320-residue polypeptide: Ferrochelatase (320 aa).

His194 and Glu275 together coordinate Fe cation.

It belongs to the ferrochelatase family.

The protein resides in the cytoplasm. It catalyses the reaction heme b + 2 H(+) = protoporphyrin IX + Fe(2+). It functions in the pathway porphyrin-containing compound metabolism; protoheme biosynthesis; protoheme from protoporphyrin-IX: step 1/1. Functionally, catalyzes the ferrous insertion into protoporphyrin IX. The polypeptide is Ferrochelatase (Xylella fastidiosa (strain M12)).